The sequence spans 122 residues: Large ribosomal subunit protein uL22 (122 aa).

The protein belongs to the universal ribosomal protein uL22 family. As to quaternary structure, part of the 50S ribosomal subunit.

Functionally, this protein binds specifically to 23S rRNA; its binding is stimulated by other ribosomal proteins, e.g. L4, L17, and L20. It is important during the early stages of 50S assembly. It makes multiple contacts with different domains of the 23S rRNA in the assembled 50S subunit and ribosome. In terms of biological role, the globular domain of the protein is located near the polypeptide exit tunnel on the outside of the subunit, while an extended beta-hairpin is found that lines the wall of the exit tunnel in the center of the 70S ribosome. This is Large ribosomal subunit protein uL22 from Thermosynechococcus vestitus (strain NIES-2133 / IAM M-273 / BP-1).